Reading from the N-terminus, the 250-residue chain is Cell division protein ZapD (250 aa).

It belongs to the ZapD family. As to quaternary structure, interacts with FtsZ.

It is found in the cytoplasm. Cell division factor that enhances FtsZ-ring assembly. Directly interacts with FtsZ and promotes bundling of FtsZ protofilaments, with a reduction in FtsZ GTPase activity. The polypeptide is Cell division protein ZapD (Bordetella petrii (strain ATCC BAA-461 / DSM 12804 / CCUG 43448)).